A 474-amino-acid polypeptide reads, in one-letter code: Lipoprotein lipase (474 aa).

Positions methionine 1–alanine 27 are cleaved as a signal peptide. An interaction with GPIHBP1 region spans residues arginine 32–threonine 53. Cysteine 54 and cysteine 67 are disulfide-bonded. Asparagine 70 carries an N-linked (GlcNAc...) asparagine glycan. Tyrosine 121 bears the 3'-nitrotyrosine mark. The Nucleophile role is filled by serine 159. The active-site Charge relay system is the aspartate 183. Position 191 is a 3'-nitrotyrosine (tyrosine 191). Residues alanine 194, arginine 197, serine 199, and aspartate 202 each coordinate Ca(2+). A disulfide bridge connects residues cysteine 243 and cysteine 266. The segment at cysteine 243–cysteine 266 is essential for determining substrate specificity. Histidine 268 functions as the Charge relay system in the catalytic mechanism. 2 cysteine pairs are disulfide-bonded: cysteine 291-cysteine 310 and cysteine 302-cysteine 305. In terms of domain architecture, PLAT spans phenylalanine 341–lysine 464. Tyrosine 343 is subject to 3'-nitrotyrosine. A glycan (N-linked (GlcNAc...) asparagine) is linked at asparagine 386. The segment at tryptophan 417–tryptophan 421 is important for interaction with lipoprotein particles. The interval lysine 430–lysine 434 is important for heparin binding. The interval isoleucine 443–aspartate 467 is interaction with GPIHBP1. Residues cysteine 445 and cysteine 465 are joined by a disulfide bond.

This sequence belongs to the AB hydrolase superfamily. Lipase family. Homodimer. Interacts with GPIHBP1 with 1:1 stoichiometry. Interacts with APOC2; the interaction activates LPL activity in the presence of lipids. Interaction with heparan sulfate proteoglycans is required to protect LPL against loss of activity. Associates with lipoprotein particles in blood plasma. Interacts with LMF1 and SEL1L; interaction with SEL1L is required to prevent aggregation of newly synthesized LPL in the endoplasmic reticulum (ER), and for normal export of LPL from the ER to the extracellular space. Interacts with SORL1; SORL1 acts as a sorting receptor, promoting LPL localization to endosomes and later to lysosomes, leading to degradation of newly synthesized LPL. Post-translationally, tyrosine nitration after lipopolysaccharide (LPS) challenge down-regulates the lipase activity.

The protein resides in the cell membrane. Its subcellular location is the secreted. It is found in the extracellular space. The protein localises to the extracellular matrix. The enzyme catalyses a triacylglycerol + H2O = a diacylglycerol + a fatty acid + H(+). It catalyses the reaction a 1,2-diacyl-sn-glycero-3-phosphocholine + H2O = a 2-acyl-sn-glycero-3-phosphocholine + a fatty acid + H(+). It carries out the reaction 1,2,3-tri-(9Z-octadecenoyl)-glycerol + H2O = di-(9Z)-octadecenoylglycerol + (9Z)-octadecenoate + H(+). The catalysed reaction is 1,2-di-(9Z-octadecenoyl)-sn-glycero-3-phosphocholine + H2O = (9Z-octadecenoyl)-sn-glycero-3-phosphocholine + (9Z)-octadecenoate + H(+). The enzyme catalyses 1,2,3-tributanoylglycerol + H2O = dibutanoylglycerol + butanoate + H(+). It catalyses the reaction 1,2-dihexadecanoyl-sn-glycero-3-phosphocholine + H2O = hexadecanoyl-sn-glycero-3-phosphocholine + hexadecanoate + H(+). Its activity is regulated as follows. The apolipoprotein APOC2 acts as a coactivator of LPL activity. Ca(2+) binding promotes protein stability and formation of the active homodimer. Interaction with GPIHBP1 protects LPL against inactivation by ANGPTL4. Key enzyme in triglyceride metabolism. Catalyzes the hydrolysis of triglycerides from circulating chylomicrons and very low density lipoproteins (VLDL), and thereby plays an important role in lipid clearance from the blood stream, lipid utilization and storage. Although it has both phospholipase and triglyceride lipase activities it is primarily a triglyceride lipase with low but detectable phospholipase activity. Mediates margination of triglyceride-rich lipoprotein particles in capillaries. Recruited to its site of action on the luminal surface of vascular endothelium by binding to GPIHBP1 and cell surface heparan sulfate proteoglycans. In Rattus norvegicus (Rat), this protein is Lipoprotein lipase (Lpl).